The sequence spans 431 residues: Histidine--tRNA ligase (431 aa).

It belongs to the class-II aminoacyl-tRNA synthetase family.

It is found in the cytoplasm. The catalysed reaction is tRNA(His) + L-histidine + ATP = L-histidyl-tRNA(His) + AMP + diphosphate + H(+). This Pyrococcus abyssi (strain GE5 / Orsay) protein is Histidine--tRNA ligase (hisS).